We begin with the raw amino-acid sequence, 224 residues long: UPF0758 protein BPUM_2444 (224 aa).

The MPN domain maps to 102 to 224; sequence VIRTPEDGAN…FVSLKEKGYL (123 aa). Positions 173, 175, and 186 each coordinate Zn(2+). Positions 173–186 match the JAMM motif motif; the sequence is HNHPSGDPTPSRED.

Belongs to the UPF0758 family.

The sequence is that of UPF0758 protein BPUM_2444 from Bacillus pumilus (strain SAFR-032).